A 505-amino-acid polypeptide reads, in one-letter code: Glutamyl-tRNA(Gln) amidotransferase subunit A (505 aa).

Catalysis depends on charge relay system residues Lys80 and Ser155. Ser179 functions as the Acyl-ester intermediate in the catalytic mechanism.

It belongs to the amidase family. GatA subfamily. As to quaternary structure, heterotrimer of A, B and C subunits.

The enzyme catalyses L-glutamyl-tRNA(Gln) + L-glutamine + ATP + H2O = L-glutaminyl-tRNA(Gln) + L-glutamate + ADP + phosphate + H(+). Allows the formation of correctly charged Gln-tRNA(Gln) through the transamidation of misacylated Glu-tRNA(Gln) in organisms which lack glutaminyl-tRNA synthetase. The reaction takes place in the presence of glutamine and ATP through an activated gamma-phospho-Glu-tRNA(Gln). The chain is Glutamyl-tRNA(Gln) amidotransferase subunit A from Acidothermus cellulolyticus (strain ATCC 43068 / DSM 8971 / 11B).